Consider the following 118-residue polypeptide: Heavy metal-associated isoprenylated plant protein 12 (118 aa).

The 65-residue stretch at 1–65 folds into the HMA domain; it reads MQVVVLKLDV…KICHTEFISV (65 aa). The interval 68-87 is disordered; sequence VKEPEKKKPDDPKKPETKPP. Basic and acidic residues predominate over residues 69–86; the sequence is KEPEKKKPDDPKKPETKP. Cysteine methyl ester is present on Cys-115. Cys-115 carries the S-farnesyl cysteine lipid modification. Positions 116-118 are cleaved as a propeptide — removed in mature form; it reads VTS.

It belongs to the HIPP family.

Probable heavy-metal-binding protein. In Arabidopsis thaliana (Mouse-ear cress), this protein is Heavy metal-associated isoprenylated plant protein 12.